The chain runs to 390 residues: Pepsin B (390 aa).

Residues 1–16 form the signal peptide; sequence MKIQVLVLVCLHLSEG. A propeptide spans 17–59 (activation peptide); sequence VERIILKKGKSIRQVMEERGVLETFLRNHPKVDPAAKYLFNND. A Peptidase A1 domain is found at 74-387; that stretch reads YFGEISIGTP…DMAANRVGFA (314 aa). D92 is an active-site residue. 2 disulfides stabilise this stretch: C105–C110 and C269–C273. Residue D278 is part of the active site. C312 and C345 are disulfide-bonded.

This sequence belongs to the peptidase A1 family.

The protein localises to the secreted. It carries out the reaction Degradation of gelatin, little activity on hemoglobin. Specificity on B chain of insulin more restricted than that of pepsin A. Does not cleave 1-Phe-|-Val-2, 4-Gln-|-His-5 or 23-Gly-|-Phe-24.. Functionally, hydrolyzes various peptides including beta-endorphin, insulin B chain, dynorphin A, and neurokinin A, with high specificity for the cleavage of the Phe-Xaa bonds. In Canis lupus familiaris (Dog), this protein is Pepsin B (PGB).